The sequence spans 512 residues: MLLAEVAATSDAVAATRSRLAKRAAIADLLRRAPADDVEIVVAYVAGELRQRRTGLGWRSLRDLPGPAEDPSLEVADVDATFAAMADLAGPGSATARAAAAAELFAAATEREQALLRGLVSGELRQGALDALVLDAVADAAGVPAPEVRRAAMFAGATGPVARAALAAAGPAEAVAALSGFMLTVGRAVRPMLAQSAPDVAAAFAKLPGGDVAVSVDVKLDGIRIQVHKAGDEVRVFTRSLDDITGRVPEIVEAVRALPAGALVLDGEALAVDAGGRPRPFQETASRSATRDADVAAAMTLTPFFFDCLHADGRDLVDAPLRERLEVLDAVAGPHVVTRLTTSDPAAAEEFFAAAVRDGQEGVVVKATDTPYEAGRRGAGWIKVKPRHTLDLVVLAVEWGSGRRRGWLSNIHLGARDPAGGFVMLGKTFKGMTDEMLAWQTERFLELETSRDEWAVHLRPEQVVEIAFDGLQRSTRYPGGLALRFARVLRYRDDKTAAEADTIDTVRTLAGL.

Position 217 (D217) interacts with ATP. K219 serves as the catalytic N6-AMP-lysine intermediate. 6 residues coordinate ATP: R224, R239, E268, F306, R377, and K383.

The protein belongs to the ATP-dependent DNA ligase family. The cofactor is Mg(2+).

It catalyses the reaction ATP + (deoxyribonucleotide)n-3'-hydroxyl + 5'-phospho-(deoxyribonucleotide)m = (deoxyribonucleotide)n+m + AMP + diphosphate.. DNA ligase that seals nicks in double-stranded DNA during DNA replication, DNA recombination and DNA repair. The polypeptide is Probable DNA ligase (Beutenbergia cavernae (strain ATCC BAA-8 / DSM 12333 / CCUG 43141 / JCM 11478 / NBRC 16432 / NCIMB 13614 / HKI 0122)).